The primary structure comprises 205 residues: MALQPCVIVGLGNPGIEYATTRHNVGFRVLDTLAQRYRVQLTQQRRFLGEVAEVLIQGQKVRLLKPTTYMNSSGQSLHALLNFYKLPLERTLVVHDDADLPLGRLRLRLSGSTGGHNGIKSIIQHCHSQQFPRLKVGIAFGDRLQQQTGPRNAVPFVLGHFSATELAILPAVLDLAVDAIELSIQSGVEVAMNRYNGKSIPLPQA.

Y18 contacts tRNA. H23 acts as the Proton acceptor in catalysis. 3 residues coordinate tRNA: Y69, N71, and N117.

The protein belongs to the PTH family. In terms of assembly, monomer.

It localises to the cytoplasm. The catalysed reaction is an N-acyl-L-alpha-aminoacyl-tRNA + H2O = an N-acyl-L-amino acid + a tRNA + H(+). Its function is as follows. Hydrolyzes ribosome-free peptidyl-tRNAs (with 1 or more amino acids incorporated), which drop off the ribosome during protein synthesis, or as a result of ribosome stalling. Catalyzes the release of premature peptidyl moieties from peptidyl-tRNA molecules trapped in stalled 50S ribosomal subunits, and thus maintains levels of free tRNAs and 50S ribosomes. The protein is Peptidyl-tRNA hydrolase of Thermosynechococcus vestitus (strain NIES-2133 / IAM M-273 / BP-1).